The following is a 270-amino-acid chain: Pancreas transcription factor 1 subunit alpha (270 aa).

One can recognise a bHLH domain in the interval 119–171 (QLRQAANVRERRRMQSINDAFEGLRSHIPTLPYEKRLSKVDTLRLAIGYINFL).

The protein localises to the nucleus. Its function is as follows. Transcription factor implicated in the cell fate determination in various organs. Binds to the E-box consensus sequence 5'-CANNTG-3'. Acts together with pdx1 to induce the pancreatic lineage within the endoderm. Plays a central role in directing the differentiation of retinal progenitors towards horizontal and amacrine fates. The polypeptide is Pancreas transcription factor 1 subunit alpha (ptf1a) (Xenopus laevis (African clawed frog)).